A 410-amino-acid chain; its full sequence is Adenosine receptor A2a (410 aa).

Residues 1 to 4 (MGSS) are Extracellular-facing. Residues 5–29 (VYIMVELAIAVLAILGNVLVCWAVW) traverse the membrane as a helical segment. The Cytoplasmic segment spans residues 30 to 39 (INSNLQNVTN). A helical transmembrane segment spans residues 40–63 (FFVVSLAAADIAVGVLAIPFAITI). At 64–74 (STGFCAACHGC) the chain is on the extracellular side. Intrachain disulfides connect Cys68-Cys154, Cys71-Cys143, and Cys74-Cys161. A helical membrane pass occupies residues 75-97 (LFFACFVLVLTQSSIFSLLAIAI). Topologically, residues 98-117 (DRYIAIRIPLRYNGLVTGMR) are cytoplasmic. A helical transmembrane segment spans residues 118–140 (AKGIIAICWVLSFAIGLTPMLGW). At 141 to 168 (NNCSQKDENSTKTCGEGRVTCLFEDVVP) the chain is on the extracellular side. Residues Asn142 and Asn149 are each glycosylated (N-linked (GlcNAc...) asparagine). Glu164 provides a ligand contact to adenosine. The helical transmembrane segment at 169–193 (MNYMVYYNFFAFVLLPLLLMLAIYL) threads the bilayer. At 194 to 229 (RIFLAARRQLKQMESQPLPGERTRSTLQKEVHAAKS) the chain is on the cytoplasmic side. A helical transmembrane segment spans residues 230 to 253 (LAIIVGLFALCWLPLHIINCFTFF). Residue Asn248 participates in adenosine binding. Cys254 and Cys257 form a disulfide bridge. The Extracellular portion of the chain corresponds to 254-261 (CSTCQHAP). Residues 262 to 285 (PWLMYLAIILSHSNSVVNPFIYAY) traverse the membrane as a helical segment. Adenosine contacts are provided by Ser272 and His273. The Cytoplasmic segment spans residues 286–410 (RIREFRQTFR…ASWSSEFAPS (125 aa)). Residues 322-410 (HSTEGEQVSL…ASWSSEFAPS (89 aa)) are interaction with GAS2L2. Residues 342–410 (ANGSAPHSGR…ASWSSEFAPS (69 aa)) form a disordered region. Basic and acidic residues predominate over residues 377-389 (TQEHQEGQEHPGL). Over residues 401-410 (ASWSSEFAPS) the composition is skewed to polar residues.

This sequence belongs to the G-protein coupled receptor 1 family. Interacts (via cytoplasmic C-terminal domain) with USP4; the interaction is direct. May interact with DRD4. Interacts with NECAB2. Interacts (via cytoplasmic C-terminal domain) with GAS2L2; interaction enhances receptor-mediated adenylyl cyclase activity. In terms of processing, ubiquitinated. Deubiquitinated by USP4; leading to stabilization and expression at the cell surface.

Its subcellular location is the cell membrane. In terms of biological role, receptor for adenosine. The activity of this receptor is mediated by G proteins which activate adenylyl cyclase. This chain is Adenosine receptor A2a (Adora2a), found in Mus musculus (Mouse).